The chain runs to 623 residues: Sulfite reductase [NADPH] flavoprotein alpha-component (623 aa).

The interval 1-32 (MSFQKNEYSHKNVSEDNNGQGGNPPIASPLND) is disordered. In terms of domain architecture, Flavodoxin-like spans 87–225 (LTIIFASQTG…AAEEWRKNAL (139 aa)). FMN is bound by residues 93–98 (SQTGNA), 140–143 (STNG), and 176–185 (LGDSSYEFFC). The FAD-binding FR-type domain occupies 258-472 (QNPYTATLLT…VEHNNNFKLP (215 aa)). FAD contacts are provided by residues T346, A380, 410-413 (RLYS), 428-430 (TVG), Y434, and 443-446 (GGAS). Residues 543 to 544 (SR), 549 to 553 (KVYVQ), and D585 each bind NADP(+). FAD is bound at residue Y623.

This sequence belongs to the NADPH-dependent sulphite reductase flavoprotein subunit CysJ family. In the N-terminal section; belongs to the flavodoxin family. It in the C-terminal section; belongs to the flavoprotein pyridine nucleotide cytochrome reductase family. As to quaternary structure, alpha(8)-beta(8). The alpha component is a flavoprotein, the beta component is a hemoprotein. The cofactor is FAD. It depends on FMN as a cofactor.

The enzyme catalyses hydrogen sulfide + 3 NADP(+) + 3 H2O = sulfite + 3 NADPH + 4 H(+). The protein operates within sulfur metabolism; hydrogen sulfide biosynthesis; hydrogen sulfide from sulfite (NADPH route): step 1/1. In terms of biological role, component of the sulfite reductase complex that catalyzes the 6-electron reduction of sulfite to sulfide. This is one of several activities required for the biosynthesis of L-cysteine from sulfate. The flavoprotein component catalyzes the electron flow from NADPH -&gt; FAD -&gt; FMN to the hemoprotein component. In Vibrio parahaemolyticus serotype O3:K6 (strain RIMD 2210633), this protein is Sulfite reductase [NADPH] flavoprotein alpha-component.